The following is a 229-amino-acid chain: Large ribosomal subunit protein uL1 (229 aa).

The protein belongs to the universal ribosomal protein uL1 family. As to quaternary structure, part of the 50S ribosomal subunit.

Binds directly to 23S rRNA. The L1 stalk is quite mobile in the ribosome, and is involved in E site tRNA release. In terms of biological role, protein L1 is also a translational repressor protein, it controls the translation of the L11 operon by binding to its mRNA. The chain is Large ribosomal subunit protein uL1 from Thermus thermophilus (strain ATCC BAA-163 / DSM 7039 / HB27).